Here is a 431-residue protein sequence, read N- to C-terminus: Glucose-1-phosphate adenylyltransferase (431 aa).

Lysine 39 lines the beta-D-fructose 1,6-bisphosphate pocket. Positions 40, 46, and 52 each coordinate AMP. Tyrosine 114 provides a ligand contact to alpha-D-glucose 1-phosphate. Arginine 130 is a binding site for AMP. Residues glycine 179, 194-195 (EK), and serine 212 contribute to the alpha-D-glucose 1-phosphate site. Residue arginine 386 coordinates AMP. 429 to 431 (QER) is a beta-D-fructose 1,6-bisphosphate binding site.

The protein belongs to the bacterial/plant glucose-1-phosphate adenylyltransferase family. As to quaternary structure, homotetramer.

The catalysed reaction is alpha-D-glucose 1-phosphate + ATP + H(+) = ADP-alpha-D-glucose + diphosphate. Its pathway is glycan biosynthesis; glycogen biosynthesis. With respect to regulation, allosterically activated by fructose-1,6-bisphosphate (F16BP) and inhibited by AMP. Its function is as follows. Involved in the biosynthesis of ADP-glucose, a building block required for the elongation reactions to produce glycogen. Catalyzes the reaction between ATP and alpha-D-glucose 1-phosphate (G1P) to produce pyrophosphate and ADP-Glc. The protein is Glucose-1-phosphate adenylyltransferase of Klebsiella pneumoniae (strain 342).